The primary structure comprises 172 residues: Zinc finger protein 580 (172 aa).

A disordered region spans residues 1 to 93; the sequence is MLLLPPRPPH…GEPGPRKGYS (93 aa). Pro residues predominate over residues 19 to 30; that stretch reads MDPPPPKAPPFP. Residue lysine 31 forms a Glycyl lysine isopeptide (Lys-Gly) (interchain with G-Cter in SUMO2) linkage. The segment covering 31–44 has biased composition (low complexity); sequence KAEGPSSTPSSAAG. A compositionally biased stretch (pro residues) spans 75–86; that stretch reads GPPQREAPPGEP. The segment at 92–114 adopts a C2H2-type 1 zinc-finger fold; that stretch reads YSCPECARVFASPLRLQSHRVSH. A Glycyl lysine isopeptide (Lys-Gly) (interchain with G-Cter in SUMO2) cross-link involves residue lysine 118. 2 consecutive C2H2-type zinc fingers follow at residues 120–142 and 150–172; these read FTCGACGKAFKRSSHLSRHRATH and HTCPLCPRRFQDAAELAQHVRLH.

Interacts with SMAD2. As to expression, expressed in endothelial cells.

The protein resides in the nucleus. In terms of biological role, involved in the regulation of endothelial cell proliferation and migration. Mediates H(2)O(2)-induced leukocyte chemotaxis by elevating interleukin-8 production and may play a role in inflammation. May be involved in transcriptional regulation. This chain is Zinc finger protein 580 (ZNF580), found in Homo sapiens (Human).